A 329-amino-acid chain; its full sequence is Glycerol-3-phosphate dehydrogenase [NAD(P)+] (329 aa).

NADPH is bound by residues tryptophan 11, arginine 30, and lysine 103. Lysine 103, glycine 132, and serine 134 together coordinate sn-glycerol 3-phosphate. NADPH is bound at residue alanine 136. Sn-glycerol 3-phosphate-binding residues include lysine 187, aspartate 240, serine 250, arginine 251, and asparagine 252. The Proton acceptor role is filled by lysine 187. Position 251 (arginine 251) interacts with NADPH. Positions 275 and 277 each coordinate NADPH.

This sequence belongs to the NAD-dependent glycerol-3-phosphate dehydrogenase family.

Its subcellular location is the cytoplasm. It carries out the reaction sn-glycerol 3-phosphate + NAD(+) = dihydroxyacetone phosphate + NADH + H(+). The catalysed reaction is sn-glycerol 3-phosphate + NADP(+) = dihydroxyacetone phosphate + NADPH + H(+). It participates in membrane lipid metabolism; glycerophospholipid metabolism. Catalyzes the reduction of the glycolytic intermediate dihydroxyacetone phosphate (DHAP) to sn-glycerol 3-phosphate (G3P), the key precursor for phospholipid synthesis. In Nitrosomonas eutropha (strain DSM 101675 / C91 / Nm57), this protein is Glycerol-3-phosphate dehydrogenase [NAD(P)+].